The sequence spans 425 residues: Beta-1,4-galactosyltransferase galt-1 (425 aa).

Residues 1–8 lie on the Cytoplasmic side of the membrane; the sequence is MPRITASK. The chain crosses the membrane as a helical; Signal-anchor for type II membrane protein span at residues 9–29; that stretch reads IVLLIALSFCITVIYHFPIAT. Residues 30-425 lie on the Lumenal side of the membrane; the sequence is RSSKEYDEYG…FDSVVGLLDL (396 aa). N-linked (GlcNAc...) asparagine glycosylation is found at Asn109 and Asn152. Positions 189-394 constitute a GT92 domain; that stretch reads KMSICVPALF…LLRVYHYKDK (206 aa).

Belongs to the glycosyltransferase 92 family. Mn(2+) is required as a cofactor. In terms of processing, N-glycosylated. Expressed in intestine and coelomocytes.

Its subcellular location is the golgi apparatus. It localises to the golgi stack membrane. Its activity is regulated as follows. Inhibited by EDTA, Cu(2+) and Zn(2+). In terms of biological role, catalyzes the transfer of beta-galactose from UDP-galactose to position 4 of alpha-1,6-linked fucose at the reducing end GlcNAc in N-glycan cores. Involved in susceptibility to the nematotoxic C.cinerea galectin Cgl2, likely by contributing to the synthesis of core alpha-1,6-fucosylated N-glycans to which Cgl2 binds. This is Beta-1,4-galactosyltransferase galt-1 from Caenorhabditis elegans.